The chain runs to 424 residues: Calreticulin-3 (424 aa).

Positions Met-1–Ser-28 are cleaved as a signal peptide. N-linked (GlcNAc...) asparagine glycosylation occurs at Asn-97. Cysteines 114 and 146 form a disulfide. 4 residues coordinate an alpha-D-glucoside: Tyr-118, Lys-120, Tyr-137, and Asp-144. 7 repeat units span residues Arg-200–Ile-211, Val-219–Asp-230, Asp-236–Ser-247, Asp-254–Glu-265, Gly-269–Ser-279, Gly-283–Pro-293, and Gly-297–Pro-307. Residues Arg-200–Glu-265 form a 4 X approximate repeats region. A compositionally biased stretch (acidic residues) spans Trp-228–Pro-237. Residues Trp-228–Lys-275 form a disordered region. Residues Asn-238–Pro-260 show a composition bias toward basic and acidic residues. The segment at Gly-269 to Pro-307 is 3 X approximate repeats. An alpha-D-glucoside is bound at residue Glu-327. A compositionally biased stretch (basic and acidic residues) spans Phe-368–Tyr-401. The segment at Phe-368 to Leu-424 is disordered. Residues Gly-402–Pro-411 are compositionally biased toward basic residues. Residues Asn-412–Leu-424 show a composition bias toward basic and acidic residues. Residues His-421 to Leu-424 carry the Prevents secretion from ER motif.

It belongs to the calreticulin family.

Its subcellular location is the endoplasmic reticulum lumen. Molecular calcium-binding chaperone promoting folding, oligomeric assembly and quality control in the ER via the calreticulin/calnexin cycle. This lectin may interact transiently with almost all of the monoglucosylated glycoproteins that are synthesized in the ER. Required for elongation factor Tu receptor (EFR) accumulation and for EFR, but not flagellin-sensing 2 (FLS2) signaling. In Arabidopsis thaliana (Mouse-ear cress), this protein is Calreticulin-3 (CRT3).